The following is a 395-amino-acid chain: MRLPRFSSTVMLSLLMVQTGILVFLVSRQVPSSPAGLGERVHVLVLSSWRSGSSFVGQLFSQHPDVFYLMEPAWHVWDTLSQGSAPALHMAVRDLIRSVFLCDMDVFDAYLPWRRNISDLFQWAVSRALCSPPVCEAFARGNISSEEVCKPLCATRPFGLAQEACSSYSHVVLKEVRFFNLQVLYPLLSDPALNLRIVHLVRDPRAVLRSREQTAKALARDNGIVLGTNGTWVEADPRLRVVNEVCRSHVRIAEAALHKPPPFLQDRYRLVRYEDLARDPLTVIRELYAFTGLGLTPQLQTWIHNITHGSGPGARREAFKTTSRDALSVSQAWRHTLPFAKIRRVQELCGGALQLLGYRSVHSELEQRDLSLDLLLPRGMDSFKWASSTEKQPES.

Residues 1–7 (MRLPRFS) lie on the Cytoplasmic side of the membrane. A helical; Signal-anchor for type II membrane protein transmembrane segment spans residues 8-26 (STVMLSLLMVQTGILVFLV). Topologically, residues 27-395 (SRQVPSSPAG…ASSTEKQPES (369 aa)) are lumenal. 49–55 (WRSGSSF) serves as a coordination point for 3'-phosphoadenylyl sulfate. N-linked (GlcNAc...) asparagine glycans are attached at residues asparagine 116 and asparagine 142. Residue 202 to 210 (RDPRAVLRS) coordinates 3'-phosphoadenylyl sulfate. Asparagine 229 and asparagine 305 each carry an N-linked (GlcNAc...) asparagine glycan.

Belongs to the sulfotransferase 1 family. Gal/GlcNAc/GalNAc subfamily. Expressed in cornea.

It is found in the golgi apparatus membrane. Sulfotransferase that utilizes 3'-phospho-5'-adenylyl sulfate (PAPS) as sulfonate donor to catalyze the transfer of sulfate to position 6 of non-reducing N-acetylglucosamine (GlcNAc) residues of keratan. Mediates sulfation of keratan in cornea. Keratan sulfate plays a central role in maintaining corneal transparency. Acts on the non-reducing terminal GlcNAc of short and long carbohydrate substrates that have poly-N-acetyllactosamine structures. May also have activity toward O-linked sugars of mucin-type acceptors. The protein is Carbohydrate sulfotransferase 5 (Chst5) of Mus musculus (Mouse).